We begin with the raw amino-acid sequence, 248 residues long: MDITLVGKKVIVTGGSRGIGLGIVKLFLENGADVEIWGLNEERGQAVIESLTGLGGEVSFARVDVSHNGGVKDCVQKFLDKHNKIDILVNNAGITRDNLLMRMSEDDWQSVISTNLTSLYYTCSSVIRHMIKARSGSIINVASIVAKIGSAGQTNYAAAKAGIIAFTKSLAKEVAARNIRVNCLAPGFIETDMTSVLNDNLKAEWLKSIPLGRAGTPEDVARVALFLASQLSSYMTAQTLVVDGGLTY.

NADP(+)-binding positions include 14 to 17 (GGSR), 64 to 65 (DV), and Asn91. Ser143 provides a ligand contact to substrate. Residue Tyr156 is the Proton acceptor of the active site. NADP(+) is bound by residues 156 to 160 (YAAAK) and Ile189.

Belongs to the short-chain dehydrogenases/reductases (SDR) family. Homotetramer.

It catalyses the reaction a (3R)-hydroxyacyl-[ACP] + NADP(+) = a 3-oxoacyl-[ACP] + NADPH + H(+). Its pathway is lipid metabolism; fatty acid biosynthesis. Catalyzes the NADPH-dependent reduction of beta-ketoacyl-ACP substrates to beta-hydroxyacyl-ACP products, the first reductive step in the elongation cycle of fatty acid biosynthesis. This Chlamydia pneumoniae (Chlamydophila pneumoniae) protein is 3-oxoacyl-[acyl-carrier-protein] reductase FabG (fabG).